The following is a 346-amino-acid chain: Putative glycosyltransferase HI_0523 (346 aa).

Belongs to the glycosyltransferase 9 family.

This chain is Putative glycosyltransferase HI_0523, found in Haemophilus influenzae (strain ATCC 51907 / DSM 11121 / KW20 / Rd).